The primary structure comprises 349 residues: Twinfilin-2 (349 aa).

An N-acetylalanine modification is found at A2. ADF-H domains lie at 4-139 and 177-313; these read QTGI…KHLS and GLAF…DEVH. Residue K14 is modified to N6-acetyllysine. Residue Y309 is modified to Phosphotyrosine. The disordered stretch occupies residues 322 to 349; the sequence is AFAKPKGPGGKRGHKRLIRGPGENGEDS. A compositionally biased stretch (basic residues) spans 330–339; that stretch reads GGKRGHKRLI. S349 is modified (phosphoserine).

This sequence belongs to the actin-binding proteins ADF family. Twinfilin subfamily. As to quaternary structure, interacts with G-actin; ADP-actin form and capping protein (CP). Isoform 2 interacts (via its N-terminal ADF-H domain) with G-actin (ADP-bound form) with significantly higher affinity than isoform 1. May also be able to interact with TWF1 and phosphoinositides, PI(4,5)P2. When bound to PI(4,5)P2, it is down-regulated. Interacts with MYO7A. Post-translationally, phosphorylated on both serine/threonine and tyrosine. Isoform 1 is ubiquitously expressed (at protein level). Isoform 2 expression is restricted to heart and skeletal muscle where it is the predominant form.

The protein resides in the cytoplasm. The protein localises to the cytoskeleton. Its subcellular location is the perinuclear region. It is found in the cell projection. It localises to the stereocilium. Functionally, actin-binding protein involved in motile and morphological processes. Inhibits actin polymerization, likely by sequestering G-actin. By capping the barbed ends of filaments, it also regulates motility. Seems to play an important role in clathrin-mediated endocytosis and distribution of endocytic organelles. May play a role in regulating the mature length of the middle and short rows of stereocilia. This is Twinfilin-2 (Twf2) from Mus musculus (Mouse).